Consider the following 332-residue polypeptide: Adenosine deaminase (332 aa).

Zn(2+) contacts are provided by histidine 12 and histidine 14. The substrate site is built by histidine 14, aspartate 16, and glycine 170. Histidine 197 contributes to the Zn(2+) binding site. Glutamate 200 functions as the Proton donor in the catalytic mechanism. Aspartate 278 is a binding site for Zn(2+). Aspartate 279 contacts substrate.

It belongs to the metallo-dependent hydrolases superfamily. Adenosine and AMP deaminases family. Adenosine deaminase subfamily. Zn(2+) is required as a cofactor.

The catalysed reaction is adenosine + H2O + H(+) = inosine + NH4(+). It catalyses the reaction 2'-deoxyadenosine + H2O + H(+) = 2'-deoxyinosine + NH4(+). In terms of biological role, catalyzes the hydrolytic deamination of adenosine and 2-deoxyadenosine. This is Adenosine deaminase from Yersinia enterocolitica serotype O:8 / biotype 1B (strain NCTC 13174 / 8081).